Here is a 122-residue protein sequence, read N- to C-terminus: Large ribosomal subunit protein uL14 (122 aa).

The protein belongs to the universal ribosomal protein uL14 family. Part of the 50S ribosomal subunit. Forms a cluster with proteins L3 and L19. In the 70S ribosome, L14 and L19 interact and together make contacts with the 16S rRNA in bridges B5 and B8.

Binds to 23S rRNA. Forms part of two intersubunit bridges in the 70S ribosome. The protein is Large ribosomal subunit protein uL14 of Clostridium tetani (strain Massachusetts / E88).